The primary structure comprises 125 residues: Small ribosomal subunit protein bS6 (125 aa).

The disordered stretch occupies residues 97–125 (TEASPMKAAKEERKPLAEVENNDFEDAEE). Residues 104–113 (AAKEERKPLA) are compositionally biased toward basic and acidic residues. Residues 116-125 (ENNDFEDAEE) are compositionally biased toward acidic residues.

It belongs to the bacterial ribosomal protein bS6 family.

Its function is as follows. Binds together with bS18 to 16S ribosomal RNA. The polypeptide is Small ribosomal subunit protein bS6 (Haemophilus influenzae (strain PittEE)).